Here is a 155-residue protein sequence, read N- to C-terminus: Ribosomal RNA large subunit methyltransferase H (155 aa).

S-adenosyl-L-methionine is bound by residues Leu-72, Gly-103, and 122 to 127; that span reads LSTLTL.

The protein belongs to the RNA methyltransferase RlmH family. As to quaternary structure, homodimer.

The protein resides in the cytoplasm. The catalysed reaction is pseudouridine(1915) in 23S rRNA + S-adenosyl-L-methionine = N(3)-methylpseudouridine(1915) in 23S rRNA + S-adenosyl-L-homocysteine + H(+). In terms of biological role, specifically methylates the pseudouridine at position 1915 (m3Psi1915) in 23S rRNA. The protein is Ribosomal RNA large subunit methyltransferase H of Klebsiella pneumoniae (strain 342).